Here is a 1026-residue protein sequence, read N- to C-terminus: Multidrug resistance protein MdtC (1026 aa).

The next 11 helical transmembrane spans lie at 15–35 (ILIA…LPVA), 333–353 (EVEE…FLFL), 360–380 (LIPA…MYLC), 387–407 (LSLM…IVVL), 431–451 (VGFT…PLLL), 463–483 (FAVT…TLTP), 528–548 (LVGV…IAIP), 853–873 (LILI…LYES), 897–917 (LFNA…IGIV), 953–973 (PIMM…LSGG), and 984–1004 (ITIV…TPVV).

This sequence belongs to the resistance-nodulation-cell division (RND) (TC 2.A.6) family. MdtC subfamily. Part of a tripartite efflux system composed of MdtA, MdtB and MdtC. MdtC forms a heteromultimer with MdtB.

It localises to the cell inner membrane. The sequence is that of Multidrug resistance protein MdtC from Salmonella paratyphi A (strain AKU_12601).